We begin with the raw amino-acid sequence, 345 residues long: Green-sensitive opsin (345 aa).

Over 1 to 37 (MENGTEGKNFYIPMNNRTGLVRSPYEYPQYYLADPWQ) the chain is Extracellular. N-linked (GlcNAc...) asparagine glycosylation is found at N3 and N16. Residues 38–62 (FKLLGIYMFFLILTGFPINALTLVV) form a helical membrane-spanning segment. Residues 63 to 74 (TAQNKKLRQPLN) lie on the Cytoplasmic side of the membrane. The chain crosses the membrane as a helical span at residues 75–100 (FILVNLAVAGLIMVCFGFTVCIYSCM). At 101–114 (VGYFSLGPLGCTIE) the chain is on the extracellular side. C111 and C188 are disulfide-bonded. Residues 115-134 (GFMATLGGQVSLWSLVVLAI) form a helical membrane-spanning segment. Topologically, residues 135–153 (ERYIVVCKPMGSFKFTATH) are cytoplasmic. Residues 154 to 177 (SAAGCAFTWIMASSCAVPPLVGWS) traverse the membrane as a helical segment. The Extracellular segment spans residues 178-203 (RYIPEGIQVSCGPDYYTLAPGFNNES). The N-linked (GlcNAc...) asparagine glycan is linked to N201. The chain crosses the membrane as a helical span at residues 204–231 (FVMYMFSCHFCVPVFTIFFTYGSLVMTV). Residues 232 to 253 (KAAAAQQQDSASTQKAEKEVTR) are Cytoplasmic-facing. The chain crosses the membrane as a helical span at residues 254–277 (MCFLMVLGFLLAWVPYASYAAWIF). Residues 278 to 285 (FNRGAAFS) lie on the Extracellular side of the membrane. A helical membrane pass occupies residues 286 to 310 (AMSMAIPSFFSKSSALFNPIIYILL). K297 carries the post-translational modification N6-(retinylidene)lysine. Topologically, residues 311 to 345 (NKQFRNCMLATIGMGGMVEDETSVSTSKTEVSTAA) are cytoplasmic.

This sequence belongs to the G-protein coupled receptor 1 family. Opsin subfamily. In terms of processing, phosphorylated on some or all of the serine and threonine residues present in the C-terminal region. In terms of tissue distribution, the color pigments are found in the cone photoreceptor cells.

Its subcellular location is the membrane. Its function is as follows. Visual pigments are the light-absorbing molecules that mediate vision. They consist of an apoprotein, opsin, covalently linked to cis-retinal. This is Green-sensitive opsin from Oryzias latipes (Japanese rice fish).